A 290-amino-acid polypeptide reads, in one-letter code: Nucleotide-binding protein BAV3158 (290 aa).

Position 9-16 (9-16 (GISGSGKS)) interacts with ATP. 58–61 (DVRS) provides a ligand contact to GTP.

This sequence belongs to the RapZ-like family.

Displays ATPase and GTPase activities. In Bordetella avium (strain 197N), this protein is Nucleotide-binding protein BAV3158.